Consider the following 157-residue polypeptide: S-ribosylhomocysteine lyase (157 aa).

3 residues coordinate Fe cation: His-54, His-58, and Cys-124.

Belongs to the LuxS family. In terms of assembly, homodimer. It depends on Fe cation as a cofactor.

It catalyses the reaction S-(5-deoxy-D-ribos-5-yl)-L-homocysteine = (S)-4,5-dihydroxypentane-2,3-dione + L-homocysteine. Functionally, involved in the synthesis of autoinducer 2 (AI-2) which is secreted by bacteria and is used to communicate both the cell density and the metabolic potential of the environment. The regulation of gene expression in response to changes in cell density is called quorum sensing. Catalyzes the transformation of S-ribosylhomocysteine (RHC) to homocysteine (HC) and 4,5-dihydroxy-2,3-pentadione (DPD). The sequence is that of S-ribosylhomocysteine lyase from Levilactobacillus brevis (strain ATCC 367 / BCRC 12310 / CIP 105137 / JCM 1170 / LMG 11437 / NCIMB 947 / NCTC 947) (Lactobacillus brevis).